We begin with the raw amino-acid sequence, 752 residues long: Reticulon-1-B (752 aa).

Disordered regions lie at residues 1–57 (MAAN…TSTD), 264–319 (EYPG…SEKQ), 334–424 (KAKE…SPSI), and 444–465 (ESCD…SPMM). A compositionally biased stretch (polar residues) spans 264-273 (EYPGNQQGKS). Residues 334-361 (KAKEGTKRFSSETNDEKQSRSFHAEKQD) show a composition bias toward basic and acidic residues. Residues 363–383 (TVMSTEATSASHYTKASSAES) are compositionally biased toward polar residues. Residues 566 to 752 (AIDLLYWRDV…AKIPGTKQKE (187 aa)) enclose the Reticulon domain. 2 helical membrane passes run 580–600 (IVFG…VVSV) and 684–704 (VLMW…LLIM).

As to expression, isoform A and isoform C are both expressed in the animal hemisphere (presumptive neural ectoderm) of blastula and gastrula stage embryos, and along the anterior neural border, in the panplacodal primordium, and in the dorsolateral side of archenteron roof of late neurula embryos. At the tailbud stage, expression of the isoforms begin to differ. Isoform A localizes to the cranial placodes including the trigeminal placode, lateral line placode, olfactory placode and otic vesicle. Isoform C localizes to the central nervous system, including the spinal cord, prosencephalon, mesencephalon and rhombencephalon, as well as the lateral line placode, otic vesicle and pronephros.

It localises to the endoplasmic reticulum membrane. The protein localises to the nucleus. Inhibits amyloid precursor protein processing, probably by blocking BACE1 activity. This Xenopus laevis (African clawed frog) protein is Reticulon-1-B (rtn1-b).